The sequence spans 129 residues: Natriuretic peptides B (129 aa).

The first 26 residues, 1 to 26 (MDPQTALSRALLLLLFLHLSLLGCRS), serve as a signal peptide directing secretion. A disulfide bridge links C107 with C123.

It belongs to the natriuretic peptide family. In terms of processing, the precursor molecule is proteolytically cleaved, possibly by FURIN or CORIN, to produce the active peptide. May undergo further proteolytic cleavage by various proteases such as DPP4, MME and possibly FAP, to give rise to a variety of shorter peptides. May be cleaved at Pro-99 by the prolyl endopeptidase FAP (seprase) activity (in vitro). May be degraded by IDE. During IDE degradation, the resulting products initially increase the activation of NPR1 and can also stimulate NPR2 to produce cGMP before the fragments are completely degraded and inactivated by IDE (in vitro).

The protein resides in the secreted. Functionally, cardiac hormone that plays a key role in mediating cardio-renal homeostasis. May also function as a paracrine antifibrotic factor in the heart. Acts by specifically binding and stimulating NPR1 to produce cGMP, which in turn activates effector proteins that drive various biological responses. Involved in regulating the extracellular fluid volume and maintaining the fluid-electrolyte balance through natriuresis, diuresis, vasorelaxation, and inhibition of renin and aldosterone secretion. Binds the clearance receptor NPR3. This is Natriuretic peptides B (NPPB) from Bos taurus (Bovine).